The following is a 652-amino-acid chain: Cleavage and polyadenylation specificity factor subunit 6 (652 aa).

The segment at Gln20–Leu85 is disordered. Residues Tyr93 to Lys173 enclose the RRM domain. Disordered regions lie at residues Lys184 to Gly440 and Ser518 to His652. Residues Pro187–Pro203 show a composition bias toward pro residues. A compositionally biased stretch (gly residues) spans Met205–Pro223. 3 stretches are compositionally biased toward pro residues: residues Ser256–His266, Gly295–Arg307, and Pro338–Gly352. Residues Pro391 to Gln406 are compositionally biased toward low complexity. Residues Gly420–Asp435 show a composition bias toward pro residues. Positions Ser518–Arg528 are enriched in basic and acidic residues. Over residues Glu529–Arg538 the composition is skewed to basic residues. Positions Glu539–Ser590 are enriched in basic and acidic residues. The residue at position 596 (Ser596) is a Phosphoserine. Residues Glu598–Ser610 are compositionally biased toward low complexity. Basic and acidic residues predominate over residues Arg612–His652.

Belongs to the RRM CPSF6/7 family.

Its subcellular location is the nucleus. Its function is as follows. May play a role in pre-mRNA 3'-processing. The protein is Cleavage and polyadenylation specificity factor subunit 6 of Drosophila melanogaster (Fruit fly).